The chain runs to 143 residues: Large ribosomal subunit protein uL15 (143 aa).

The interval 1 to 56 (MQLNSIKPAAGAKHAKRRVGRGIGSGLGKTAGRGHKGQKSRAGGYHKVGFEGGQMP) is disordered. The span at 21-31 (RGIGSGLGKTA) shows a compositional bias: gly residues.

The protein belongs to the universal ribosomal protein uL15 family. Part of the 50S ribosomal subunit.

Its function is as follows. Binds to the 23S rRNA. The polypeptide is Large ribosomal subunit protein uL15 (Verminephrobacter eiseniae (strain EF01-2)).